We begin with the raw amino-acid sequence, 364 residues long: Protein PTOV1 homolog (364 aa).

Residues 187-207 (AKRKPGVKTPKQPQPEEPPPV) form a disordered region.

Belongs to the Mediator complex subunit 25 family. PTOV1 subfamily.

The chain is Protein PTOV1 homolog from Drosophila melanogaster (Fruit fly).